A 450-amino-acid polypeptide reads, in one-letter code: Phosphoglucosamine mutase (450 aa).

The active-site Phosphoserine intermediate is S101. Mg(2+) contacts are provided by S101, D240, D242, and D244. S101 bears the Phosphoserine mark.

Belongs to the phosphohexose mutase family. It depends on Mg(2+) as a cofactor. In terms of processing, activated by phosphorylation.

The enzyme catalyses alpha-D-glucosamine 1-phosphate = D-glucosamine 6-phosphate. Catalyzes the conversion of glucosamine-6-phosphate to glucosamine-1-phosphate. The chain is Phosphoglucosamine mutase from Streptococcus uberis (strain ATCC BAA-854 / 0140J).